The chain runs to 426 residues: Serine--tRNA ligase (426 aa).

L-serine is bound at residue 232–234; that stretch reads TAE. 263–265 is an ATP binding site; the sequence is RRE. Glutamate 286 contributes to the L-serine binding site. 350–353 is an ATP binding site; it reads EISS. Serine 385 contacts L-serine.

The protein belongs to the class-II aminoacyl-tRNA synthetase family. Type-1 seryl-tRNA synthetase subfamily. As to quaternary structure, homodimer. The tRNA molecule binds across the dimer.

The protein resides in the cytoplasm. The catalysed reaction is tRNA(Ser) + L-serine + ATP = L-seryl-tRNA(Ser) + AMP + diphosphate + H(+). The enzyme catalyses tRNA(Sec) + L-serine + ATP = L-seryl-tRNA(Sec) + AMP + diphosphate + H(+). It participates in aminoacyl-tRNA biosynthesis; selenocysteinyl-tRNA(Sec) biosynthesis; L-seryl-tRNA(Sec) from L-serine and tRNA(Sec): step 1/1. Catalyzes the attachment of serine to tRNA(Ser). Is also able to aminoacylate tRNA(Sec) with serine, to form the misacylated tRNA L-seryl-tRNA(Sec), which will be further converted into selenocysteinyl-tRNA(Sec). In Fervidobacterium nodosum (strain ATCC 35602 / DSM 5306 / Rt17-B1), this protein is Serine--tRNA ligase.